The sequence spans 141 residues: MPTPSMEDYIEQIYILIEEKGYARVSDIAEALSVHPSSVTKMVQKLDKDEYLVYEKYRGLVLTPKGKKIGQRLVYRHELLEQFLRLIGVNEENIYHDVEGIEHHLSWNAIDRIGDLVQYFQEDERRIEALRNIQKRNEQGE.

The HTH dtxR-type domain maps to 1 to 63 (MPTPSMEDYI…YEKYRGLVLT (63 aa)). Mn(2+) contacts are provided by aspartate 8, glutamate 11, histidine 77, glutamate 99, glutamate 102, and histidine 103.

It belongs to the DtxR/MntR family. In terms of assembly, homodimer.

It localises to the cytoplasm. With respect to regulation, DNA binding is strongly activated by Mn(2+). Its function is as follows. Central regulator of manganese homeostasis. The sequence is that of HTH-type transcriptional regulator MntR from Geobacillus thermodenitrificans (strain NG80-2).